A 244-amino-acid chain; its full sequence is tRNA (guanine-N(7)-)-methyltransferase (244 aa).

The segment at Met1–Arg24 is disordered. S-adenosyl-L-methionine is bound by residues Glu74, Glu99, Asp126, and Asp149. Residue Asp149 is part of the active site. Substrate is bound by residues Lys153, Asp185, and Thr222 to Glu225.

Belongs to the class I-like SAM-binding methyltransferase superfamily. TrmB family.

The enzyme catalyses guanosine(46) in tRNA + S-adenosyl-L-methionine = N(7)-methylguanosine(46) in tRNA + S-adenosyl-L-homocysteine. It functions in the pathway tRNA modification; N(7)-methylguanine-tRNA biosynthesis. In terms of biological role, catalyzes the formation of N(7)-methylguanine at position 46 (m7G46) in tRNA. This is tRNA (guanine-N(7)-)-methyltransferase from Pseudomonas syringae pv. syringae (strain B728a).